The following is a 557-amino-acid chain: Potassium-transporting ATPase potassium-binding subunit (557 aa).

12 consecutive transmembrane segments (helical) span residues 5–25 (GFLL…PLGS), 63–83 (LSAI…MLLG), 132–152 (GLTV…FALI), 170–190 (LLRI…LFFI), 253–273 (FVQM…FGEV), 283–303 (LLWA…WAEV), 329–349 (VLVS…AVIA), 356–376 (ALGG…FGGV), 379–399 (GLYG…LMIG), 416–436 (LTAL…ALAM), 484–504 (LLAL…MAIA), and 526–546 (LFVG…FIPA).

The protein belongs to the KdpA family. As to quaternary structure, the system is composed of three essential subunits: KdpA, KdpB and KdpC.

It localises to the cell inner membrane. Functionally, part of the high-affinity ATP-driven potassium transport (or Kdp) system, which catalyzes the hydrolysis of ATP coupled with the electrogenic transport of potassium into the cytoplasm. This subunit binds the periplasmic potassium ions and delivers the ions to the membrane domain of KdpB through an intramembrane tunnel. This Escherichia coli O6:K15:H31 (strain 536 / UPEC) protein is Potassium-transporting ATPase potassium-binding subunit.